Here is a 275-residue protein sequence, read N- to C-terminus: Large ribosomal subunit protein uL2 (275 aa).

2 disordered regions span residues 36 to 55 and 224 to 263; these read GLTG…RRMG and VVMN…RQNK.

It belongs to the universal ribosomal protein uL2 family. As to quaternary structure, part of the 50S ribosomal subunit. Forms a bridge to the 30S subunit in the 70S ribosome.

Its function is as follows. One of the primary rRNA binding proteins. Required for association of the 30S and 50S subunits to form the 70S ribosome, for tRNA binding and peptide bond formation. It has been suggested to have peptidyltransferase activity; this is somewhat controversial. Makes several contacts with the 16S rRNA in the 70S ribosome. The polypeptide is Large ribosomal subunit protein uL2 (Rhodospirillum centenum (strain ATCC 51521 / SW)).